Here is a 302-residue protein sequence, read N- to C-terminus: 3-methyl-2-oxobutanoate hydroxymethyltransferase 1 (302 aa).

Residues Asp75 and Asp118 each coordinate Mg(2+). 3-methyl-2-oxobutanoate-binding positions include Asp75–Ser76, Asp118, and Lys147. Position 149 (Glu149) interacts with Mg(2+). The active-site Proton acceptor is the Glu217.

The protein belongs to the PanB family. Homodecamer; pentamer of dimers. Mg(2+) serves as cofactor.

Its subcellular location is the cytoplasm. It catalyses the reaction 3-methyl-2-oxobutanoate + (6R)-5,10-methylene-5,6,7,8-tetrahydrofolate + H2O = 2-dehydropantoate + (6S)-5,6,7,8-tetrahydrofolate. Its pathway is cofactor biosynthesis; (R)-pantothenate biosynthesis; (R)-pantoate from 3-methyl-2-oxobutanoate: step 1/2. Functionally, catalyzes the reversible reaction in which hydroxymethyl group from 5,10-methylenetetrahydrofolate is transferred onto alpha-ketoisovalerate to form ketopantoate. This is 3-methyl-2-oxobutanoate hydroxymethyltransferase 1 from Zymomonas mobilis subsp. mobilis (strain ATCC 31821 / ZM4 / CP4).